Here is a 198-residue protein sequence, read N- to C-terminus: MICOS complex subunit MIC26 (198 aa).

An N-terminal signal peptide occupies residues 1-25 (MFKVIQRSVGPASLSLLTFKVYAAP). The chain crosses the membrane as a helical span at residues 108-128 (PGFFPRLGVIGFAGLIGLLLA). A glycan (O-linked (Xyl...) (chondroitin sulfate) serine) is linked at serine 162.

This sequence belongs to the apolipoprotein O/MICOS complex subunit Mic27 family. In terms of assembly, component of the mitochondrial contact site and cristae organizing system (MICOS) complex, composed of at least MICOS10/MIC10, CHCHD3/MIC19, CHCHD6/MIC25, APOOL/MIC27, IMMT/MIC60, APOO/MIC23/MIC26 and MICOS13/MIC13. This complex was also known under the names MINOS or MitOS complex. he MICOS complex associates with mitochondrial outer membrane proteins SAMM50, MTX1 and MTX2 (together described as components of the mitochondrial outer membrane sorting assembly machinery (SAM) complex) and DNAJC11, mitochondrial inner membrane protein TMEM11 and with HSPA9. The MICOS and SAM complexes together with DNAJC11 are part of a large protein complex spanning both membranes termed the mitochondrial intermembrane space bridging (MIB) complex. Interacts with IMMT/MIC60. Interacts with MICOS10/MIC10 and APOOL/MIC27. Post-translationally, O-glycosylation; glycosaminoglycan of chondroitin-sulfate type. In terms of tissue distribution, expressed in all tissues examined. Up-regulated in diabetic heart.

It is found in the mitochondrion inner membrane. Its subcellular location is the secreted. The protein localises to the mitochondrion. The protein resides in the golgi apparatus membrane. It localises to the endoplasmic reticulum membrane. In terms of biological role, component of the MICOS complex, a large protein complex of the mitochondrial inner membrane that plays crucial roles in the maintenance of crista junctions, inner membrane architecture, and formation of contact sites to the outer membrane. Plays a crucial role in crista junction formation and mitochondrial function. Can promote cardiac lipotoxicity by enhancing mitochondrial respiration and fatty acid metabolism in cardiac myoblasts. Promotes cholesterol efflux from macrophage cells. Detected in HDL, LDL and VLDL. Secreted by a microsomal triglyceride transfer protein (MTTP)-dependent mechanism, probably as a VLDL-associated protein that is subsequently transferred to HDL. The sequence is that of MICOS complex subunit MIC26 (APOO) from Homo sapiens (Human).